Here is a 242-residue protein sequence, read N- to C-terminus: Urease accessory protein UreF (242 aa).

It belongs to the UreF family. UreD, UreF and UreG form a complex that acts as a GTP-hydrolysis-dependent molecular chaperone, activating the urease apoprotein by helping to assemble the nickel containing metallocenter of UreC. The UreE protein probably delivers the nickel.

It is found in the cytoplasm. In terms of biological role, required for maturation of urease via the functional incorporation of the urease nickel metallocenter. This Bradyrhizobium diazoefficiens (strain JCM 10833 / BCRC 13528 / IAM 13628 / NBRC 14792 / USDA 110) protein is Urease accessory protein UreF.